We begin with the raw amino-acid sequence, 310 residues long: GPN-loop GTPase 2 (310 aa).

Alanine 2 bears the N-acetylalanine mark. 19–24 (GSGKTT) is a GTP binding site. The Gly-Pro-Asn (GPN)-loop; involved in dimer interface motif lies at 76–78 (GPN). 178 to 181 (SKMD) is a binding site for GTP.

This sequence belongs to the GPN-loop GTPase family. Heterodimers with GPN1 or GPN3. Binds to RNA polymerase II (RNAPII).

Functionally, small GTPase required for proper localization of RNA polymerase II and III (RNAPII and RNAPIII). May act at an RNAP assembly step prior to nuclear import. The sequence is that of GPN-loop GTPase 2 (GPN2) from Bos taurus (Bovine).